A 192-amino-acid chain; its full sequence is uncharacterized protein (192 aa).

In terms of domain architecture, Nudix hydrolase spans 29 to 160 (HRQAAVLIPI…PLDIYRRGDS (132 aa)). Residues 67–89 (GAVDDTDASVIAAALREAEEEVA) carry the Nudix box motif. The Mg(2+) site is built by glutamate 83 and glutamate 87.

It belongs to the Nudix hydrolase family. PCD1 subfamily. It depends on Mn(2+) as a cofactor. Mg(2+) serves as cofactor.

Functionally, probably mediates the hydrolysis of some nucleoside diphosphate derivatives. This is an uncharacterized protein from Shigella flexneri serotype 5b (strain 8401).